Reading from the N-terminus, the 151-residue chain is 3-hydroxyacyl-[acyl-carrier-protein] dehydratase FabZ (151 aa).

Residue histidine 58 is part of the active site.

The protein belongs to the thioester dehydratase family. FabZ subfamily.

The protein localises to the cytoplasm. The catalysed reaction is a (3R)-hydroxyacyl-[ACP] = a (2E)-enoyl-[ACP] + H2O. Functionally, involved in unsaturated fatty acids biosynthesis. Catalyzes the dehydration of short chain beta-hydroxyacyl-ACPs and long chain saturated and unsaturated beta-hydroxyacyl-ACPs. This chain is 3-hydroxyacyl-[acyl-carrier-protein] dehydratase FabZ, found in Histophilus somni (strain 129Pt) (Haemophilus somnus).